Reading from the N-terminus, the 200-residue chain is Small ribosomal subunit protein uS4 (200 aa).

A disordered region spans residues 21–42 (GTGKELQKRPYPPGQHGPGQRR). An S4 RNA-binding domain is found at 92–155 (SRLDNLVYRL…RNLQVIKEAI (64 aa)).

The protein belongs to the universal ribosomal protein uS4 family. Part of the 30S ribosomal subunit. Contacts protein S5. The interaction surface between S4 and S5 is involved in control of translational fidelity.

Functionally, one of the primary rRNA binding proteins, it binds directly to 16S rRNA where it nucleates assembly of the body of the 30S subunit. Its function is as follows. With S5 and S12 plays an important role in translational accuracy. This is Small ribosomal subunit protein uS4 from Geobacillus thermodenitrificans (strain NG80-2).